An 887-amino-acid chain; its full sequence is Bifunctional uridylyltransferase/uridylyl-removing enzyme (887 aa).

The uridylyltransferase stretch occupies residues 1–329 (MKGLNAKPFS…FPDEEAVTTI (329 aa)). The tract at residues 330–686 (INERFQKRGD…TRAAETGAGV (357 aa)) is uridylyl-removing. The 123-residue stretch at 448 to 570 (VDEHILMVVR…MRDERHLIAL (123 aa)) folds into the HD domain. ACT domains are found at residues 687 to 772 (EVLV…GRLS) and 796 to 871 (VLSI…PETP). The segment at 864 to 887 (TSPQPETPGKAPGKPSAGDRIIPR) is disordered.

This sequence belongs to the GlnD family. The cofactor is Mg(2+).

It carries out the reaction [protein-PII]-L-tyrosine + UTP = [protein-PII]-uridylyl-L-tyrosine + diphosphate. It catalyses the reaction [protein-PII]-uridylyl-L-tyrosine + H2O = [protein-PII]-L-tyrosine + UMP + H(+). Uridylyltransferase (UTase) activity is inhibited by glutamine, while glutamine activates uridylyl-removing (UR) activity. Its function is as follows. Modifies, by uridylylation and deuridylylation, the PII regulatory proteins (GlnB and homologs), in response to the nitrogen status of the cell that GlnD senses through the glutamine level. Under low glutamine levels, catalyzes the conversion of the PII proteins and UTP to PII-UMP and PPi, while under higher glutamine levels, GlnD hydrolyzes PII-UMP to PII and UMP (deuridylylation). Thus, controls uridylylation state and activity of the PII proteins, and plays an important role in the regulation of nitrogen assimilation and metabolism. This is Bifunctional uridylyltransferase/uridylyl-removing enzyme from Nitrosospira multiformis (strain ATCC 25196 / NCIMB 11849 / C 71).